The primary structure comprises 352 residues: tRNA-specific 2-thiouridylase MnmA (352 aa).

ATP-binding positions include 9–16 and Met35; that span reads ALSGGVDS. Cys96 functions as the Nucleophile in the catalytic mechanism. An intrachain disulfide couples Cys96 to Cys192. Gly120 is a binding site for ATP. An interaction with tRNA region spans residues 142 to 144; that stretch reads KDQ. The active-site Cysteine persulfide intermediate is the Cys192. The interval 299–300 is interaction with tRNA; sequence RY.

It belongs to the MnmA/TRMU family.

It localises to the cytoplasm. It catalyses the reaction S-sulfanyl-L-cysteinyl-[protein] + uridine(34) in tRNA + AH2 + ATP = 2-thiouridine(34) in tRNA + L-cysteinyl-[protein] + A + AMP + diphosphate + H(+). Its function is as follows. Catalyzes the 2-thiolation of uridine at the wobble position (U34) of tRNA, leading to the formation of s(2)U34. The sequence is that of tRNA-specific 2-thiouridylase MnmA from Acidithiobacillus ferrooxidans (strain ATCC 23270 / DSM 14882 / CIP 104768 / NCIMB 8455) (Ferrobacillus ferrooxidans (strain ATCC 23270)).